A 231-amino-acid chain; its full sequence is 7-cyano-7-deazaguanine synthase (231 aa).

Residue 8-18 (FSGGQDSTTCL) participates in ATP binding. Residues cysteine 188, cysteine 197, cysteine 200, and cysteine 203 each coordinate Zn(2+).

It belongs to the QueC family. Zn(2+) is required as a cofactor.

It catalyses the reaction 7-carboxy-7-deazaguanine + NH4(+) + ATP = 7-cyano-7-deazaguanine + ADP + phosphate + H2O + H(+). It participates in purine metabolism; 7-cyano-7-deazaguanine biosynthesis. In terms of biological role, catalyzes the ATP-dependent conversion of 7-carboxy-7-deazaguanine (CDG) to 7-cyano-7-deazaguanine (preQ(0)). The chain is 7-cyano-7-deazaguanine synthase from Enterobacter sp. (strain 638).